Here is a 308-residue protein sequence, read N- to C-terminus: uncharacterized protein (308 aa).

Residues 1–17 (MKSLALLLSLLINFSIG) form the signal peptide. 4 N-linked (GlcNAc...) asparagine glycosylation sites follow: Asn13, Asn91, Asn159, and Asn210. The tract at residues 213 to 308 (DEISGGTGAG…HDNYISSFCT (96 aa)) is disordered. 2 stretches are compositionally biased toward gly residues: residues 217-231 (GGTGAGDYSGTGSGS) and 239-252 (SDGGSSGSGSGSGS). Positions 267-284 (NKNNNKNKNNNNNNNNYN) are enriched in low complexity.

The protein localises to the secreted. This is an uncharacterized protein from Dictyostelium discoideum (Social amoeba).